We begin with the raw amino-acid sequence, 471 residues long: Serine hydroxymethyltransferase, cytosolic (471 aa).

An N6-(pyridoxal phosphate)lysine modification is found at Lys249.

Belongs to the SHMT family. The cofactor is pyridoxal 5'-phosphate.

Its subcellular location is the cytoplasm. It is found in the cytosol. It carries out the reaction (6R)-5,10-methylene-5,6,7,8-tetrahydrofolate + glycine + H2O = (6S)-5,6,7,8-tetrahydrofolate + L-serine. It participates in one-carbon metabolism; tetrahydrofolate interconversion. Its function is as follows. Catalyzes the interconversion of serine and glycine. Essential for viability and required for virulence in a murine model of established pulmonary infection. This chain is Serine hydroxymethyltransferase, cytosolic, found in Aspergillus fumigatus (strain ATCC MYA-4609 / CBS 101355 / FGSC A1100 / Af293) (Neosartorya fumigata).